We begin with the raw amino-acid sequence, 102 residues long: Small ribosomal subunit protein uS10 (102 aa).

Belongs to the universal ribosomal protein uS10 family. In terms of assembly, part of the 30S ribosomal subunit.

Involved in the binding of tRNA to the ribosomes. In Desulforamulus reducens (strain ATCC BAA-1160 / DSM 100696 / MI-1) (Desulfotomaculum reducens), this protein is Small ribosomal subunit protein uS10.